A 602-amino-acid polypeptide reads, in one-letter code: MNANNLLQAAIFIVVLIAAAVPVARYLTRVMDGSSAVVRVFGPLERALYRFAGIDPRTEMSWKQYALATVAFNALGVLFLYALLRVQGWLPGNPQGFGPMTVDGALNTAVSFVTNTNWQDYTPEQTVSYLAQMLGLTVQNFLSAATGIVVVLALIRGFARHTAQTIGNFWVDVTRVTLYVLVPMAAIIAALLMSQGVIQNTKAYQDVPTLQTTSYAAPRLDAQGNPVKDAKGNPVTVQTSVKAQTLAMGPVASQEAIKMLGTNGGGFFNGNSSHPYENPTPFSNFLEIFAILIIPAALCLVFGNTIGDRRQGVAVLAAMTVALAAAIGIETSAEQGGTPVLASLNVDLAASPLQAGGNMEGKETRFGIAQTGLFVVATTAASCGAVDAMHDSLTPVGGLVPMLLMQLGEVIFGGVGSGLYGMLVFALLAVFVAGLMIGRTPEYVGKKIESYEMKMVSIVVLLTPLLVLVGTSIAVLADAGRAGIANPGPHGFSEILYAFSSAANNNGSAFGGLSVNTPFYNWMTAIAMWFGRFGTIVPVLAIAGSLAAKKRIAATSGTLPTHGPLFVVLLLGTVLLVGALTYMPALALGPGVEHLMLFVGAH.

The next 10 membrane-spanning stretches (helical) occupy residues Ala3–Val23, Gln64–Leu84, Gly135–Ile155, Leu178–Ile198, Phe282–Phe302, Val313–Ala333, Gly418–Gly438, Val456–Leu476, Trp522–Ile542, and Leu565–Ala585.

Belongs to the KdpA family. As to quaternary structure, the system is composed of three essential subunits: KdpA, KdpB and KdpC.

It localises to the cell inner membrane. Part of the high-affinity ATP-driven potassium transport (or Kdp) system, which catalyzes the hydrolysis of ATP coupled with the electrogenic transport of potassium into the cytoplasm. This subunit binds the periplasmic potassium ions and delivers the ions to the membrane domain of KdpB through an intramembrane tunnel. In Burkholderia pseudomallei (strain K96243), this protein is Potassium-transporting ATPase potassium-binding subunit.